The sequence spans 254 residues: 5'-nucleotidase SurE (254 aa).

Residues aspartate 8, aspartate 9, serine 39, and asparagine 91 each contribute to the a divalent metal cation site.

Belongs to the SurE nucleotidase family. A divalent metal cation is required as a cofactor.

It localises to the cytoplasm. It catalyses the reaction a ribonucleoside 5'-phosphate + H2O = a ribonucleoside + phosphate. Nucleotidase that shows phosphatase activity on nucleoside 5'-monophosphates. In Methylibium petroleiphilum (strain ATCC BAA-1232 / LMG 22953 / PM1), this protein is 5'-nucleotidase SurE.